Consider the following 258-residue polypeptide: E3 ubiquitin-protein ligase RNF170 (258 aa).

Over 1–24 (MAKYQGEVQSLKLDDDSVIEGVSD) the chain is Lumenal. The chain crosses the membrane as a helical span at residues 25–45 (QVLVAVVVSFALIATLVYALF). The Cytoplasmic segment spans residues 46–201 (RNVHQNIHPE…GGLFWMFRIR (156 aa)). The RING-type zinc-finger motif lies at 87–130 (CPICLHQASFPVETNCGHLFCGACIIAYWRYGSWLGAISCPICR). The chain crosses the membrane as a helical span at residues 202-222 (IILCLMGAFFYLISPLDFVPE). A topological domain (lumenal) is located at residue Ala-223. A helical membrane pass occupies residues 224–244 (LFGILGFLDDFFVIFLLLIYI). Residues 245–258 (SIMYREVITQRLTR) lie on the Cytoplasmic side of the membrane.

As to quaternary structure, (Microbial infection) Interacts with human cytomegalovirus protein NEC2/UL50; this interaction promotes of UBA7 ubiquitination and subsequent proteasomal degradation. In terms of assembly, constitutively associated with the ERLIN1/ERLIN 2 complex. Interacts with activated ITPR1. Expressed in the spinal cord.

The protein localises to the endoplasmic reticulum membrane. The catalysed reaction is S-ubiquitinyl-[E2 ubiquitin-conjugating enzyme]-L-cysteine + [acceptor protein]-L-lysine = [E2 ubiquitin-conjugating enzyme]-L-cysteine + N(6)-ubiquitinyl-[acceptor protein]-L-lysine.. It participates in protein modification; protein ubiquitination. E3 ubiquitin-protein ligase that plays an essential role in stimulus-induced inositol 1,4,5-trisphosphate receptor type 1 (ITPR1) ubiquitination and degradation via the endoplasmic reticulum-associated degradation (ERAD) pathway. Also involved in ITPR1 turnover in resting cells. Selectively inhibits the TLR3-triggered innate immune response by promoting the 'Lys-48'-linked polyubiquitination and degradation of TLR3. This Homo sapiens (Human) protein is E3 ubiquitin-protein ligase RNF170 (RNF170).